Here is a 625-residue protein sequence, read N- to C-terminus: Adenine deaminase 2 (625 aa).

The protein belongs to the metallo-dependent hydrolases superfamily. Adenine deaminase family. The cofactor is Mn(2+).

It carries out the reaction adenine + H2O + H(+) = hypoxanthine + NH4(+). The protein is Adenine deaminase 2 of Bradyrhizobium diazoefficiens (strain JCM 10833 / BCRC 13528 / IAM 13628 / NBRC 14792 / USDA 110).